The following is a 515-amino-acid chain: Anthranilate synthase component 1 (515 aa).

L-tryptophan contacts are provided by residues T40 and 291–293; that span reads PYM. Residue 328-329 participates in chorismate binding; the sequence is GT. Residue E361 participates in Mg(2+) binding. Chorismate-binding positions include Y449, R469, 483-485, and G485; that span reads GAG. Mg(2+) is bound at residue E498.

The protein belongs to the anthranilate synthase component I family. As to quaternary structure, heterotetramer consisting of two non-identical subunits: a beta subunit (TrpG) and a large alpha subunit (TrpE). Requires Mg(2+) as cofactor.

The catalysed reaction is chorismate + L-glutamine = anthranilate + pyruvate + L-glutamate + H(+). Its pathway is amino-acid biosynthesis; L-tryptophan biosynthesis; L-tryptophan from chorismate: step 1/5. With respect to regulation, feedback inhibited by tryptophan. Functionally, part of a heterotetrameric complex that catalyzes the two-step biosynthesis of anthranilate, an intermediate in the biosynthesis of L-tryptophan. In the first step, the glutamine-binding beta subunit (TrpG) of anthranilate synthase (AS) provides the glutamine amidotransferase activity which generates ammonia as a substrate that, along with chorismate, is used in the second step, catalyzed by the large alpha subunit of AS (TrpE) to produce anthranilate. In the absence of TrpG, TrpE can synthesize anthranilate directly from chorismate and high concentrations of ammonia. The chain is Anthranilate synthase component 1 (trpE) from Buchnera aphidicola subsp. Schizaphis graminum (strain Sg).